Here is a 132-residue protein sequence, read N- to C-terminus: MARILNIEIPSNKRVVISLTYILGIGKSLSKEIIVKANEKLAKAKEKTFTEDSRVKDLSEEQLQAIRDSAKTYLTEGDLRREVSLNIKRLMEIKCYRGIRHRKGLPVRGQVTQKNARTRKGPRKTVAGKKGK.

The segment at Pro-106–Lys-132 is disordered. Residues Ala-116–Lys-132 are compositionally biased toward basic residues.

The protein belongs to the universal ribosomal protein uS13 family. As to quaternary structure, part of the 30S ribosomal subunit. Forms a loose heterodimer with protein S19. Forms two bridges to the 50S subunit in the 70S ribosome.

In terms of biological role, located at the top of the head of the 30S subunit, it contacts several helices of the 16S rRNA. In the 70S ribosome it contacts the 23S rRNA (bridge B1a) and protein L5 of the 50S subunit (bridge B1b), connecting the 2 subunits; these bridges are implicated in subunit movement. Contacts the tRNAs in the A and P-sites. This Mycoplasmopsis pulmonis (strain UAB CTIP) (Mycoplasma pulmonis) protein is Small ribosomal subunit protein uS13.